A 280-amino-acid polypeptide reads, in one-letter code: MGQKINPYGFRLGITTDWKSRWYADKQYADYVKEDVAIRRLLSTGLERAGIADVEIERTRDRVRVDIHTARPGIVIGRRGTEADRIRADLEKLTGKQVQLNILEVRNPESQAQLVAQGVAEQLSNRVAFRRAMRKAIQSAMRQPNVKGIRVQCSGRLGGAEMSRSEFYREGRVPLHTLRADIGYGLYEAKTTFGRIGVKVWIYKGDVVGGKRELAAAAPAGAERPRRERPSGTRPRRSGASGTTATGTEAGRAAASADESTAAGQPAEAAPAAEPQSTES.

The KH type-2 domain maps to 38 to 106 (IRRLLSTGLE…QVQLNILEVR (69 aa)). Residues 215 to 280 (AAAAPAGAER…PAAEPQSTES (66 aa)) form a disordered region. Low complexity predominate over residues 238–280 (SGASGTTATGTEAGRAAASADESTAAGQPAEAAPAAEPQSTES).

This sequence belongs to the universal ribosomal protein uS3 family. As to quaternary structure, part of the 30S ribosomal subunit. Forms a tight complex with proteins S10 and S14.

In terms of biological role, binds the lower part of the 30S subunit head. Binds mRNA in the 70S ribosome, positioning it for translation. In Mycolicibacterium paratuberculosis (strain ATCC BAA-968 / K-10) (Mycobacterium paratuberculosis), this protein is Small ribosomal subunit protein uS3.